We begin with the raw amino-acid sequence, 102 residues long: Large ribosomal subunit protein bL21 (102 aa).

This sequence belongs to the bacterial ribosomal protein bL21 family. In terms of assembly, part of the 50S ribosomal subunit. Contacts protein L20.

In terms of biological role, this protein binds to 23S rRNA in the presence of protein L20. This Nitratidesulfovibrio vulgaris (strain ATCC 29579 / DSM 644 / CCUG 34227 / NCIMB 8303 / VKM B-1760 / Hildenborough) (Desulfovibrio vulgaris) protein is Large ribosomal subunit protein bL21.